A 472-amino-acid chain; its full sequence is Nucleoporin NUP49/NSP49 (472 aa).

One copy of the FG 1 repeat lies at 2-3 (FG). A GLFG 1 repeat occupies 14–17 (GLFG). A disordered region spans residues 28–104 (NTGFSFGGTQ…TANTGGGLFG (77 aa)). One copy of the FG 2 repeat lies at 33–34 (FG). One copy of the GLFG 2 repeat lies at 48–51 (GLFG). A compositionally biased stretch (low complexity) spans 64-80 (SFGQQQQQSQTNAFGGS). FG repeat units follow at residues 65 to 66 (FG) and 77 to 78 (FG). GLFG repeat units lie at residues 86–89 (GLFG) and 101–104 (GLFG). The SLFG 1 repeat unit spans residues 113–116 (SLFG). GLFG repeat units lie at residues 125 to 128 (GLFG) and 148 to 151 (GLFG). Residues 159–162 (SLFG) form an SLFG 2 repeat. The GLFG 7; approximate repeat unit spans residues 175-178 (GMFG). One copy of the SLFG 3 repeat lies at 185–188 (SLFG). One copy of the GLFG 8 repeat lies at 199–202 (GLFG). The stretch at 210-213 (SLFG) is one SLFG 4 repeat. The interval 211-242 (LFGSSNNNNNNNNSNNIMSASGGLFGNQQQQL) is disordered. Low complexity predominate over residues 214 to 226 (SSNNNNNNNNSNN). The stretch at 233 to 236 (GLFG) is one GLFG 9 repeat.

The protein belongs to the nucleoporin GLFG family. As to quaternary structure, component of the nuclear pore complex (NPC). NPC constitutes the exclusive means of nucleocytoplasmic transport. NPCs allow the passive diffusion of ions and small molecules and the active, nuclear transport receptor-mediated bidirectional transport of macromolecules such as proteins, RNAs, ribonucleoparticles (RNPs), and ribosomal subunits across the nuclear envelope. Due to its 8-fold rotational symmetry, all subunits are present with 8 copies or multiples thereof. NUP49 is part of the NUP57 subcomplex (NIC96, NSP1, NUP49, NUP57) interacting with NUP57. Interacts through its FG repeats with karyopherins.

Its subcellular location is the nucleus. The protein localises to the nuclear pore complex. It is found in the nucleus membrane. Functionally, functions as a component of the nuclear pore complex (NPC). NPC components, collectively referred to as nucleoporins (NUPs), can play the role of both NPC structural components and of docking or interaction partners for transiently associated nuclear transport factors. Active directional transport is assured by both, a Phe-Gly (FG) repeat affinity gradient for these transport factors across the NPC and a transport cofactor concentration gradient across the nuclear envelope (GSP1 and GSP2 GTPases associated predominantly with GTP in the nucleus, with GDP in the cytoplasm). NUP49 plays an important role in several nuclear transport pathways including poly(A)+ RNA, tRNA, and pre-ribosome transport. The protein is Nucleoporin NUP49/NSP49 (NUP49) of Saccharomyces cerevisiae (strain ATCC 204508 / S288c) (Baker's yeast).